Consider the following 314-residue polypeptide: Cytosolic sulfotransferase 3 (314 aa).

3'-phosphoadenylyl sulfate is bound at residue 71 to 76 (KSGTLW). Histidine 121 functions as the Proton acceptor in the catalytic mechanism. 3'-phosphoadenylyl sulfate-binding positions include arginine 143, serine 151, tyrosine 209, and 275–277 (RKG).

This sequence belongs to the sulfotransferase 1 family.

Its subcellular location is the cytoplasm. In terms of biological role, sulfotransferase that utilizes 3'-phospho-5'-adenylyl sulfate (PAPS) as sulfonate donor. This chain is Cytosolic sulfotransferase 3 (SOT3), found in Arabidopsis thaliana (Mouse-ear cress).